The primary structure comprises 442 residues: Citrate synthase (442 aa).

Catalysis depends on residues H274, H320, and D375.

Belongs to the citrate synthase family.

The catalysed reaction is oxaloacetate + acetyl-CoA + H2O = citrate + CoA + H(+). The protein operates within carbohydrate metabolism; tricarboxylic acid cycle; isocitrate from oxaloacetate: step 1/2. Its function is as follows. Catalyzes both citrate generation and citrate cleavage. Part of a reversible tricarboxylic acid (TCA) cycle that can fix carbon dioxide autotrophically and may represent an ancestral mode of the conventional reductive TCA (rTCA) cycle. The direction is controlled by the available carbon source(s). The chain is Citrate synthase from Thermosulfidibacter takaii (strain DSM 17441 / JCM 13301 / NBRC 103674 / ABI70S6).